The sequence spans 255 residues: Putative keratin-87 protein (255 aa).

The IF rod domain occupies 1-255 (MEANSGRLAS…SRGCVRALVL (255 aa)). 2 coiled-coil regions span residues 19–81 (LEGY…EIRV) and 147–227 (LRRT…VMNS).

The protein belongs to the intermediate filament family. As to quaternary structure, heterotetramer of two type I and two type II keratins.

In Homo sapiens (Human), this protein is Putative keratin-87 protein (KRT87P).